Consider the following 122-residue polypeptide: Large ribosomal subunit protein bL12 (122 aa).

Belongs to the bacterial ribosomal protein bL12 family. As to quaternary structure, homodimer. Part of the ribosomal stalk of the 50S ribosomal subunit. Forms a multimeric L10(L12)X complex, where L10 forms an elongated spine to which 2 to 4 L12 dimers bind in a sequential fashion. Binds GTP-bound translation factors.

Forms part of the ribosomal stalk which helps the ribosome interact with GTP-bound translation factors. Is thus essential for accurate translation. In Buchnera aphidicola subsp. Baizongia pistaciae (strain Bp), this protein is Large ribosomal subunit protein bL12.